A 542-amino-acid polypeptide reads, in one-letter code: MAVKEIKYYAEAREKIMAGVDTLADAVKVTLGPRGRNVVLEKSWGPPTVTKDGVTVAKEIDLEDKFENMGAQMVKEVASKTSDVAGDGTTTATILAQAIYRAGSKLVSAGHNPMALKRGIELAVAAAVRELRNMSKPTKDQKEIAQVGTISANNDVAIGDIIAEAMNKVGKEGVITVEEAKSMETTLEVVEGMQFDRGYVSPYFVTDPERMEVVLEDPYILINEKKISNMKDLLPVLEQIAKMGAPLLIVAEDVEGEALATLVVNKLRGTLKVSAVKAPGFGDRRKAMLEDLAVLTGGKVVSEDIGVKLENVSLQDLGRAKTVRIDKDNTTIVDGAGARSAIEARVKQIRAQIDETTSDYDREKLQERLAKIVGGVAVVRVGAATETEMKEKKARVEDALNATRAAVEEGIVPGGGVALLRCLPALEKLDLHGEDAFGVKIVMRALEEPVRQIANNAGHEGSVVVQQVKQGTGSHGFNADTEVYEDLSAAGVIDPTKVVRFALQNAASVASLLLTTEAMIAEKPKKQKPAPAMPGAGMEDMY.

ATP-binding positions include 30-33 (TLGP), Lys-51, 87-91 (DGTTT), Gly-415, and Asp-494.

It belongs to the chaperonin (HSP60) family. In terms of assembly, forms a cylinder of 14 subunits composed of two heptameric rings stacked back-to-back. Interacts with the co-chaperonin GroES.

It is found in the cytoplasm. It catalyses the reaction ATP + H2O + a folded polypeptide = ADP + phosphate + an unfolded polypeptide.. Together with its co-chaperonin GroES, plays an essential role in assisting protein folding. The GroEL-GroES system forms a nano-cage that allows encapsulation of the non-native substrate proteins and provides a physical environment optimized to promote and accelerate protein folding. This Syntrophobacter fumaroxidans (strain DSM 10017 / MPOB) protein is Chaperonin GroEL 2.